The following is a 154-amino-acid chain: 3-hydroxyacyl-[acyl-carrier-protein] dehydratase FabZ (154 aa).

Residue His-54 is part of the active site.

This sequence belongs to the thioester dehydratase family. FabZ subfamily.

It localises to the cytoplasm. It catalyses the reaction a (3R)-hydroxyacyl-[ACP] = a (2E)-enoyl-[ACP] + H2O. Its function is as follows. Involved in unsaturated fatty acids biosynthesis. Catalyzes the dehydration of short chain beta-hydroxyacyl-ACPs and long chain saturated and unsaturated beta-hydroxyacyl-ACPs. The polypeptide is 3-hydroxyacyl-[acyl-carrier-protein] dehydratase FabZ (Chlamydia caviae (strain ATCC VR-813 / DSM 19441 / 03DC25 / GPIC) (Chlamydophila caviae)).